We begin with the raw amino-acid sequence, 474 residues long: MASVPSSSSLPVSHVRRHEDVSTPSAPPTKRSNNQSQPPESYEPNTWLQQQREQEQQKKLAAENIKKQSIEATGNNEMVGEEEEDILSKPCGPHKRRFQFVMIRNITFAIPEGYDVEPNSIEYLGGGSFGNVIKTSAVCRDGLRRYVAIKKMREPFFDPHHARRIFRETKLLQLMRHDNIICALDIYTPDEENDFRDVYVVTEFAGRSLYQILKQQRDYGRRVLTDEHIKFIIYQIIRALKYIHSANIIHRDLKPGNLALTDDSDLMILDFGLARSLEKKDTSLTQYVQTRWYRSPEVIYWKIDSYTNLADMWSLGCIAAELLTGEPLFPGDEPNAQYQRITQLCGSPDEELLTKIENDNSSAIKAVIQSYTTHKRRNFRDVFSAHNPSEDFIDLLEKLLVLDPEKRITVEEAIQHPYLAEFSLPEDEPRADHIFDLDDSQARTRFEWRDAVWKEIMNYKRLSSSPLIPGEADR.

A compositionally biased stretch (low complexity) spans 1-13 (MASVPSSSSLPVS). The disordered stretch occupies residues 1 to 90 (MASVPSSSSL…EEEEDILSKP (90 aa)). Residues 30 to 48 (KRSNNQSQPPESYEPNTWL) are compositionally biased toward polar residues. Residues 52 to 69 (REQEQQKKLAAENIKKQS) show a composition bias toward basic and acidic residues. The 306-residue stretch at 114 to 419 (YDVEPNSIEY…VEEAIQHPYL (306 aa)) folds into the Protein kinase domain. ATP-binding positions include 124-132 (LGGGSFGNV) and Lys150. The Proton acceptor role is filled by Asp252. Thr285 is subject to Phosphothreonine. The short motif at 285 to 287 (TQY) is the TXY element. A Phosphotyrosine modification is found at Tyr287.

It belongs to the protein kinase superfamily. CMGC Ser/Thr protein kinase family. MAP kinase subfamily. In terms of assembly, interacts with mak-2. May interact with vhp-1. May interact with uev-3. The cofactor is Mg(2+). Dually phosphorylated on Thr-285 and Tyr-287, which activates the enzyme. As to expression, expressed throughout the intestine.

The protein localises to the nucleus. The protein resides in the cytoplasm. It localises to the cell projection. Its subcellular location is the axon. It is found in the dendrite. The protein localises to the cilium. It catalyses the reaction L-seryl-[protein] + ATP = O-phospho-L-seryl-[protein] + ADP + H(+). It carries out the reaction L-threonyl-[protein] + ATP = O-phospho-L-threonyl-[protein] + ADP + H(+). Activated by phosphorylation on threonine and tyrosine. Its function is as follows. Responds to activation by environmental stress and pro-inflammatory cytokines by phosphorylating downstream targets. Involved in axon regeneration after injury, probably downstream of dlk-1 and mkk-4 and upstream of mak-2. May phosphorylate mak-2. Plays a role in cilium length regulation, possibly by reducing rab-5 mediated endocytosis. Plays a role in the formation of muscle connections, also called muscle arm extensions, between the body wall and the motor axons in the dorsal and ventral cord. In Caenorhabditis elegans, this protein is Mitogen-activated protein kinase pmk-3 (pmk-3).